A 402-amino-acid polypeptide reads, in one-letter code: CCA-adding enzyme (402 aa).

Glycine 32 and arginine 35 together coordinate ATP. CTP contacts are provided by glycine 32 and arginine 35. The Mg(2+) site is built by aspartate 45 and aspartate 47. 5 residues coordinate ATP: arginine 116, aspartate 159, arginine 162, arginine 165, and arginine 168. CTP-binding residues include arginine 116, aspartate 159, arginine 162, arginine 165, and arginine 168.

The protein belongs to the tRNA nucleotidyltransferase/poly(A) polymerase family. Bacterial CCA-adding enzyme type 3 subfamily. In terms of assembly, homodimer. Mg(2+) serves as cofactor.

It carries out the reaction a tRNA precursor + 2 CTP + ATP = a tRNA with a 3' CCA end + 3 diphosphate. The enzyme catalyses a tRNA with a 3' CCA end + 2 CTP + ATP = a tRNA with a 3' CCACCA end + 3 diphosphate. In terms of biological role, catalyzes the addition and repair of the essential 3'-terminal CCA sequence in tRNAs without using a nucleic acid template. Adds these three nucleotides in the order of C, C, and A to the tRNA nucleotide-73, using CTP and ATP as substrates and producing inorganic pyrophosphate. tRNA 3'-terminal CCA addition is required both for tRNA processing and repair. Also involved in tRNA surveillance by mediating tandem CCA addition to generate a CCACCA at the 3' terminus of unstable tRNAs. While stable tRNAs receive only 3'-terminal CCA, unstable tRNAs are marked with CCACCA and rapidly degraded. The chain is CCA-adding enzyme from Streptococcus agalactiae serotype III (strain NEM316).